The following is an 809-amino-acid chain: Glycerol-3-phosphate acyltransferase (809 aa).

An HXXXXD motif motif is present at residues 306-311 (HRSHMD).

It belongs to the GPAT/DAPAT family.

It is found in the cell inner membrane. It catalyses the reaction sn-glycerol 3-phosphate + an acyl-CoA = a 1-acyl-sn-glycero-3-phosphate + CoA. It participates in phospholipid metabolism; CDP-diacylglycerol biosynthesis; CDP-diacylglycerol from sn-glycerol 3-phosphate: step 1/3. This Vibrio vulnificus (strain CMCP6) protein is Glycerol-3-phosphate acyltransferase.